Here is a 496-residue protein sequence, read N- to C-terminus: Cytochrome f, chloroplastic (496 aa).

A chloroplast-targeting transit peptide spans 1 to 149 (MASLQTPVMV…VGAAAGSANA (149 aa)). Heme contacts are provided by Tyr150, Cys170, Cys173, and His174. A helical membrane pass occupies residues 462–481 (VQAFLFFSFTVLATQTLLVV).

This sequence belongs to the cytochrome f family. As to quaternary structure, interacts with plastocyanin and Rieske iron-sulfur protein. Heme serves as cofactor.

It localises to the plastid. It is found in the chloroplast thylakoid membrane. Translocates protons across the thylakoid membrane and transfers electrons from photosystem II to photosystem I. It receives electrons from the Rieske iron-sulfur protein and passes them to plastocyanin. The polypeptide is Cytochrome f, chloroplastic (petA) (Euglena gracilis).